The chain runs to 216 residues: Probable nicotinate-nucleotide adenylyltransferase (216 aa).

The protein belongs to the NadD family.

The catalysed reaction is nicotinate beta-D-ribonucleotide + ATP + H(+) = deamido-NAD(+) + diphosphate. Its pathway is cofactor biosynthesis; NAD(+) biosynthesis; deamido-NAD(+) from nicotinate D-ribonucleotide: step 1/1. Functionally, catalyzes the reversible adenylation of nicotinate mononucleotide (NaMN) to nicotinic acid adenine dinucleotide (NaAD). The sequence is that of Probable nicotinate-nucleotide adenylyltransferase from Citrifermentans bemidjiense (strain ATCC BAA-1014 / DSM 16622 / JCM 12645 / Bem) (Geobacter bemidjiensis).